Here is a 135-residue protein sequence, read N- to C-terminus: ATP synthase epsilon chain 1 (135 aa).

Belongs to the ATPase epsilon chain family. F-type ATPases have 2 components, CF(1) - the catalytic core - and CF(0) - the membrane proton channel. CF(1) has five subunits: alpha(3), beta(3), gamma(1), delta(1), epsilon(1). CF(0) has three main subunits: a, b and c.

It is found in the cell inner membrane. Functionally, produces ATP from ADP in the presence of a proton gradient across the membrane. The protein is ATP synthase epsilon chain 1 of Nitrobacter hamburgensis (strain DSM 10229 / NCIMB 13809 / X14).